Consider the following 442-residue polypeptide: Chromosomal replication initiator protein DnaA (442 aa).

Positions 1–69 (METLWDGILS…AQAGEQVIGR (69 aa)) are domain I, interacts with DnaA modulators. The tract at residues 69 to 103 (RPIQVDFIVSEQSEEALKPVIEREPAPAAPPANVA) is domain II. A domain III, AAA+ region region spans residues 104 to 320 (SLNSKYTFSR…GALIRAVAYV (217 aa)). ATP is bound by residues G148, G150, K151, and T152. A domain IV, binds dsDNA region spans residues 321-442 (SISGLPMTVE…GNRLEADARH (122 aa)).

The protein belongs to the DnaA family. Oligomerizes as a right-handed, spiral filament on DNA at oriC.

It is found in the cytoplasm. Functionally, plays an essential role in the initiation and regulation of chromosomal replication. ATP-DnaA binds to the origin of replication (oriC) to initiate formation of the DNA replication initiation complex once per cell cycle. Binds the DnaA box (a 9 base pair repeat at the origin) and separates the double-stranded (ds)DNA. Forms a right-handed helical filament on oriC DNA; dsDNA binds to the exterior of the filament while single-stranded (ss)DNA is stabiized in the filament's interior. The ATP-DnaA-oriC complex binds and stabilizes one strand of the AT-rich DNA unwinding element (DUE), permitting loading of DNA polymerase. After initiation quickly degrades to an ADP-DnaA complex that is not apt for DNA replication. Binds acidic phospholipids. This Gloeobacter violaceus (strain ATCC 29082 / PCC 7421) protein is Chromosomal replication initiator protein DnaA.